Consider the following 234-residue polypeptide: Large ribosomal subunit protein uL1 (234 aa).

Belongs to the universal ribosomal protein uL1 family. As to quaternary structure, part of the 50S ribosomal subunit.

Its function is as follows. Binds directly to 23S rRNA. The L1 stalk is quite mobile in the ribosome, and is involved in E site tRNA release. Functionally, protein L1 is also a translational repressor protein, it controls the translation of the L11 operon by binding to its mRNA. In Erwinia tasmaniensis (strain DSM 17950 / CFBP 7177 / CIP 109463 / NCPPB 4357 / Et1/99), this protein is Large ribosomal subunit protein uL1.